Reading from the N-terminus, the 123-residue chain is Small ribosomal subunit protein uS12 (123 aa).

D89 is subject to 3-methylthioaspartic acid.

Belongs to the universal ribosomal protein uS12 family. Part of the 30S ribosomal subunit. Contacts proteins S8 and S17. May interact with IF1 in the 30S initiation complex.

With S4 and S5 plays an important role in translational accuracy. In terms of biological role, interacts with and stabilizes bases of the 16S rRNA that are involved in tRNA selection in the A site and with the mRNA backbone. Located at the interface of the 30S and 50S subunits, it traverses the body of the 30S subunit contacting proteins on the other side and probably holding the rRNA structure together. The combined cluster of proteins S8, S12 and S17 appears to hold together the shoulder and platform of the 30S subunit. The sequence is that of Small ribosomal subunit protein uS12 from Methylorubrum extorquens (strain PA1) (Methylobacterium extorquens).